Consider the following 469-residue polypeptide: Sulfate adenylyltransferase subunit 1 (469 aa).

A tr-type G domain is found at 22 to 237 (KEVLRFITCG…LEEVPVKSEE (216 aa)). The tract at residues 31 to 38 (GSVDDGKS) is G1. Residue 31–38 (GSVDDGKS) coordinates GTP. The tract at residues 89-93 (GITID) is G2. The G3 stretch occupies residues 110 to 113 (DTPG). GTP contacts are provided by residues 110 to 114 (DTPGH) and 165 to 168 (NKMD). The interval 165 to 168 (NKMD) is G4. A G5 region spans residues 202-204 (SAK).

It belongs to the TRAFAC class translation factor GTPase superfamily. Classic translation factor GTPase family. CysN/NodQ subfamily. As to quaternary structure, heterodimer composed of CysD, the smaller subunit, and CysN.

It carries out the reaction sulfate + ATP + H(+) = adenosine 5'-phosphosulfate + diphosphate. Its pathway is sulfur metabolism; hydrogen sulfide biosynthesis; sulfite from sulfate: step 1/3. With CysD forms the ATP sulfurylase (ATPS) that catalyzes the adenylation of sulfate producing adenosine 5'-phosphosulfate (APS) and diphosphate, the first enzymatic step in sulfur assimilation pathway. APS synthesis involves the formation of a high-energy phosphoric-sulfuric acid anhydride bond driven by GTP hydrolysis by CysN coupled to ATP hydrolysis by CysD. In Methylorubrum extorquens (strain CM4 / NCIMB 13688) (Methylobacterium extorquens), this protein is Sulfate adenylyltransferase subunit 1.